A 163-amino-acid polypeptide reads, in one-letter code: Protein YtsP (163 aa).

The protein belongs to the free Met sulfoxide reductase family.

The chain is Protein YtsP (ytsP) from Bacillus subtilis (strain 168).